The chain runs to 495 residues: Genome polyprotein (495 aa).

Over 1–445 (MRCIGISNRD…LNQVFGTIYG (445 aa)) the chain is Extracellular. Intrachain disulfides connect Cys-3–Cys-30, Cys-60–Cys-121, Cys-74–Cys-105, and Cys-92–Cys-116. N-linked (GlcNAc...) asparagine; by host glycosylation is present at Asn-67. Positions 98–111 (DRGWGNGCGLFGKG) are fusion peptide. Asn-153 carries N-linked (GlcNAc...) asparagine; by host glycosylation. Cystine bridges form between Cys-185–Cys-285 and Cys-302–Cys-333. Residues 446–466 (AAFSGVSWTMKILIGVIITCI) form a helical membrane-spanning segment. The Cytoplasmic portion of the chain corresponds to 467–472 (GMNSRS). The helical transmembrane segment at 473 to 493 (TSLSVSLVLVGVVTLYLGGMV) threads the bilayer. Residues 494 to 495 (HA) are Extracellular-facing.

Homodimer; in the endoplasmic reticulum and Golgi. Interacts with protein prM. Interacts with non-structural protein 1. In terms of processing, N-glycosylated. Specific enzymatic cleavages in vivo yield mature proteins. Cleavages in the lumen of endoplasmic reticulum are performed by host signal peptidase, wereas cleavages in the cytoplasmic side are performed by serine protease NS3. Signal cleavage at the 2K-4B site requires a prior NS3 protease-mediated cleavage at the 4A-2K site.

The protein localises to the virion membrane. It is found in the host endoplasmic reticulum membrane. Its function is as follows. Binds to host cell surface receptor and mediates fusion between viral and cellular membranes. Envelope protein is synthesized in the endoplasmic reticulum in the form of heterodimer with protein prM. They play a role in virion budding in the ER, and the newly formed immature particle is covered with 60 spikes composed of heterodimer between precursor prM and envelope protein E. The virion is transported to the Golgi apparatus where the low pH causes dissociation of PrM-E heterodimers and formation of E homodimers. prM-E cleavage is inefficient, and many virions are only partially matured. These uncleaved prM would play a role in immune evasion. The protein is Genome polyprotein of Aedes aegypti (Yellowfever mosquito).